The primary structure comprises 156 residues: MSLTDIALLVFIVLFLLYAIYDEAIMPRQRSATLLRVNLKRRNKADSLIFIGLLAILVYRNISDQGAPFTTWLLATLMVVAIYIFYLRWPKLLFKQQGFYYGNVFIDYARIRGMNLSEDGFLVIDLEKRRLLIQVANLDSLDEIFKFLLEHQQKPA.

The next 3 helical transmembrane spans lie at 6 to 26 (IALLVFIVLFLLYAIYDEAIM), 46 to 63 (DSLIFIGLLAILVYRNIS), and 67 to 87 (APFTTWLLATLMVVAIYIFYL).

This sequence belongs to the UPF0266 family.

Its subcellular location is the cell inner membrane. In Edwardsiella ictaluri (strain 93-146), this protein is UPF0266 membrane protein NT01EI_1718.